A 241-amino-acid chain; its full sequence is UDP-2,3-diacylglucosamine hydrolase (241 aa).

Asp8, His10, Asp41, Asn79, and His114 together coordinate Mn(2+). Residue 79-80 coordinates substrate; that stretch reads NR. Substrate-binding residues include Asp122, Ser160, Asn164, Lys167, and His195. Mn(2+)-binding residues include His195 and His197.

This sequence belongs to the LpxH family. Mn(2+) is required as a cofactor.

It localises to the cell inner membrane. The catalysed reaction is UDP-2-N,3-O-bis[(3R)-3-hydroxytetradecanoyl]-alpha-D-glucosamine + H2O = 2-N,3-O-bis[(3R)-3-hydroxytetradecanoyl]-alpha-D-glucosaminyl 1-phosphate + UMP + 2 H(+). It functions in the pathway glycolipid biosynthesis; lipid IV(A) biosynthesis; lipid IV(A) from (3R)-3-hydroxytetradecanoyl-[acyl-carrier-protein] and UDP-N-acetyl-alpha-D-glucosamine: step 4/6. Hydrolyzes the pyrophosphate bond of UDP-2,3-diacylglucosamine to yield 2,3-diacylglucosamine 1-phosphate (lipid X) and UMP by catalyzing the attack of water at the alpha-P atom. Involved in the biosynthesis of lipid A, a phosphorylated glycolipid that anchors the lipopolysaccharide to the outer membrane of the cell. This chain is UDP-2,3-diacylglucosamine hydrolase, found in Aeromonas hydrophila subsp. hydrophila (strain ATCC 7966 / DSM 30187 / BCRC 13018 / CCUG 14551 / JCM 1027 / KCTC 2358 / NCIMB 9240 / NCTC 8049).